We begin with the raw amino-acid sequence, 127 residues long: Glycine cleavage system H protein (127 aa).

Residues Thr22–Glu104 form the Lipoyl-binding domain. At Lys63 the chain carries N6-lipoyllysine.

The protein belongs to the GcvH family. In terms of assembly, the glycine cleavage system is composed of four proteins: P, T, L and H. It depends on (R)-lipoate as a cofactor.

The glycine cleavage system catalyzes the degradation of glycine. The H protein shuttles the methylamine group of glycine from the P protein to the T protein. In terms of biological role, is also involved in protein lipoylation via its role as an octanoyl/lipoyl carrier protein intermediate. The chain is Glycine cleavage system H protein from Anoxybacillus flavithermus (strain DSM 21510 / WK1).